The chain runs to 509 residues: UDP-N-acetylmuramoyl-L-alanyl-D-glutamate--2,6-diaminopimelate ligase (509 aa).

Position 32 (S32) interacts with UDP-N-acetyl-alpha-D-muramoyl-L-alanyl-D-glutamate. 117–123 (GTNGKTT) is a binding site for ATP. UDP-N-acetyl-alpha-D-muramoyl-L-alanyl-D-glutamate is bound by residues 159-160 (TT), S186, Q192, and R194. N6-carboxylysine is present on K226. Meso-2,6-diaminopimelate contacts are provided by residues R401, 425–428 (DNPR), G476, and E480. The Meso-diaminopimelate recognition motif motif lies at 425-428 (DNPR).

The protein belongs to the MurCDEF family. MurE subfamily. Mg(2+) is required as a cofactor. Carboxylation is probably crucial for Mg(2+) binding and, consequently, for the gamma-phosphate positioning of ATP.

The protein localises to the cytoplasm. The enzyme catalyses UDP-N-acetyl-alpha-D-muramoyl-L-alanyl-D-glutamate + meso-2,6-diaminopimelate + ATP = UDP-N-acetyl-alpha-D-muramoyl-L-alanyl-gamma-D-glutamyl-meso-2,6-diaminopimelate + ADP + phosphate + H(+). Its pathway is cell wall biogenesis; peptidoglycan biosynthesis. Catalyzes the addition of meso-diaminopimelic acid to the nucleotide precursor UDP-N-acetylmuramoyl-L-alanyl-D-glutamate (UMAG) in the biosynthesis of bacterial cell-wall peptidoglycan. This Prochlorococcus marinus (strain NATL1A) protein is UDP-N-acetylmuramoyl-L-alanyl-D-glutamate--2,6-diaminopimelate ligase.